A 317-amino-acid polypeptide reads, in one-letter code: Inositol oxygenase 4 (317 aa).

Residues Arg58 and 115–117 (DES) contribute to the substrate site. His128, His153, and Asp154 together coordinate Fe cation. Substrate contacts are provided by residues Lys157 and 174–175 (GD). Positions 226, 252, and 285 each coordinate Fe cation. 252–253 (HS) contacts substrate.

This sequence belongs to the myo-inositol oxygenase family. It depends on Fe cation as a cofactor. As to expression, expressed in flowers, leaves, siliques, and to a lesser extent in roots.

It localises to the cytoplasm. It carries out the reaction myo-inositol + O2 = D-glucuronate + H2O + H(+). It participates in polyol metabolism; myo-inositol degradation into D-glucuronate; D-glucuronate from myo-inositol: step 1/1. Catalyzes the oxygenative cleavage of myo-inositol to D-glucuronate. Involved in the biosynthesis of UDP-glucuronic acid (UDP-GlcA), providing nucleotide sugars for cell-wall polymers. May be also involved in plant ascorbate biosynthesis. This is Inositol oxygenase 4 (MIOX4) from Arabidopsis thaliana (Mouse-ear cress).